Reading from the N-terminus, the 140-residue chain is Pre-mRNA-splicing factor NTC20 (140 aa).

S139 bears the Phosphoserine mark.

In terms of assembly, belongs to the NTC complex (or PRP19-associated complex), composed of at least CEF1, CLF1, ISY1, NTC20, SNT309, SYF1, SYF2, and PRP19. The NTC complex associates with the spliceosome after the release of the U1 and U4 snRNAs and forms the CWC spliceosome subcomplex (or CEF1-associated complex) reminiscent of a late-stage spliceosome composed also of the U2, U5 and U6 snRNAs and at least BUD13, BRR2, CDC40, CUS1, CWC2, CWC15, CWC21, CWC22, CWC23, CWC24, CWC25, CWC27, ECM2, HSH155, IST3, LEA1, MSL1, PRP8, PRP9, PRP11, PRP21, PRP22, PRP45, PRP46, SLU7, SMB1, SMD1, SMD2, SMD3, SMX2, SMX3, SNU114, SPP2, RSE1 and YJU2. Interacts with CEF1, CLF1, ISY1, PRP46, and SYF1.

Its subcellular location is the nucleus. In terms of biological role, involved in pre-mRNA splicing. As a component of the NTC complex, associates to the spliceosome to mediate conformational rearrangement or to stabilize the structure of the spliceosome after U4 snRNA dissociation, which leads to spliceosome maturation. The polypeptide is Pre-mRNA-splicing factor NTC20 (NTC20) (Saccharomyces cerevisiae (strain ATCC 204508 / S288c) (Baker's yeast)).